The sequence spans 141 residues: Nucleoside diphosphate kinase (141 aa).

6 residues coordinate ATP: K11, F59, R87, T93, R104, and N114. The active-site Pros-phosphohistidine intermediate is H117.

It belongs to the NDK family. In terms of assembly, homotetramer. It depends on Mg(2+) as a cofactor.

Its subcellular location is the cytoplasm. The catalysed reaction is a 2'-deoxyribonucleoside 5'-diphosphate + ATP = a 2'-deoxyribonucleoside 5'-triphosphate + ADP. It carries out the reaction a ribonucleoside 5'-diphosphate + ATP = a ribonucleoside 5'-triphosphate + ADP. Major role in the synthesis of nucleoside triphosphates other than ATP. The ATP gamma phosphate is transferred to the NDP beta phosphate via a ping-pong mechanism, using a phosphorylated active-site intermediate. This Halorhodospira halophila (strain DSM 244 / SL1) (Ectothiorhodospira halophila (strain DSM 244 / SL1)) protein is Nucleoside diphosphate kinase.